The chain runs to 785 residues: Arrestin domain-containing protein D (785 aa).

Disordered regions lie at residues Gln29–Pro69, Ile172–Thr205, Ser326–Asn367, Ser435–Asn486, and Tyr608–Gln642. The span at Leu173–Thr205 shows a compositional bias: low complexity. The span at Ser435–Asn450 shows a compositional bias: low complexity. Residues Ser466–Tyr478 are compositionally biased toward basic residues. Positions Tyr608 to Asn633 are enriched in low complexity. An FYVE-type zinc finger spans residues Glu682–Lys742. Cys688, Cys691, Cys704, Cys707, Cys712, Cys715, Cys734, and Cys737 together coordinate Zn(2+). The segment at Cys688–Phe738 adopts an RING-type; degenerate zinc-finger fold.

Belongs to the arrestin family.

The sequence is that of Arrestin domain-containing protein D (adcD) from Dictyostelium discoideum (Social amoeba).